The primary structure comprises 1147 residues: MARYKPNQQNHTDPKQQVVLPTYKLDSNLVLLPGIIYNVTFSRFKAATLLSRFKSQVSNVSLITNLLNEYDFDSKQEEKDDVESKYMPPPISSDAVTGIKQFYQYEQQFKGKNDDSSKVEAEPQSEFDWLVLAINPNLEKIKEPQTSSDDEYENIVTIARVIGMVDDTSNIKLTLQALTRGIKHNKVKPTQTNEVLIDIDWNSNIDDVASKYDVLNSKVLKLFRSIDGFIVDYRQALTVAASLAKKGKQSKDLKQKGDLLTLNPLANSLYLHLAASKDFTKAYISLQKLFGTFNSSSNTKIDNKTFLRLIDLTCAIIPFPNHEKLKLLNKFNSIDRINEVNRMLESMIQVFYNLKKNNKIINHWFYNEATNIQRANVVASQLKSIRLILEGMTNKPDKDIKTNQSPPRQLVRRGNNNKPAKSPMSDDGNESNDEYDDDEDDDDDEDELKAITSFIKGKLPNISTLSSDTKRLIVKDFKRIKSSPPGNSDFHVIRNYLEIVADIPWDRYVTRFKSNKDIDLEFAKKQLDSDHYGLQHVKTRLIQYLVVLKLLGINAEKEFEKIESENSKKSKKNESSSGSMGKNDKQRSEKTFTRSDDSIVIANNDETSIAHETARNKNKKSKSLTTIEKSSLNKSLMVSKNNKSPIIMLVGPPGTGKTSLAKSIAKSLGRNFQRVSLGGIKDESEIRGHRRTYVGAMPGVIIQSLRKSRSMNPVILLDEIDKIIGGNNGVNKFNGDPSAALLEVLDPEQNTSFIDHYLGFPVDLSQVMFICTANEASNLSRPLLDRLEMIEVGAYDYDEKLVIGERYLLPRQIKRNGIPNADLIDVDKSVMQKVILDYTREAGVRNFERSLGRICRFKAVEYSQSLEKLSEYQPKVEIEDLPKYLGLPFANLSTELFESPIESAKCGVVNGLSYNSDGSGSVLVFESIGFNHEGKSGSSSLNMTGRLGDVLMESAKIGLTFIKSIIYKNLLNLSDRNLSENLIDKINNMEIHLHVPSGSIQKDGPSAGITVALSFLSLILEKPVPLDVAMTGEITLRGLVLPIGGIKEKILGAHLNGIKRVIVPRENRKDLIEEYCRSTNDFNQLNDLLLDNENKYNFKRCEPEKFWFDKYGITIHYAREFWDVIKAVWGDALLVKVEQARMVEYHL.

In terms of domain architecture, Lon N-terminal spans 20 to 348; that stretch reads LPTYKLDSNL…EVNRMLESMI (329 aa). Disordered stretches follow at residues 395-444 and 561-626; these read KPDK…DDDD and KIES…SLTT. Residues 427–444 are compositionally biased toward acidic residues; the sequence is DGNESNDEYDDDEDDDDD. Composition is skewed to basic and acidic residues over residues 561–574 and 582–597; these read KIES…KKNE and KNDK…RSDD. Position 651–658 (651–658) interacts with ATP; the sequence is GPPGTGKT. Residues 903-1131 enclose the Lon proteolytic domain; the sequence is SAKCGVVNGL…WDVIKAVWGD (229 aa). Residues serine 1006 and lysine 1049 contribute to the active site.

This sequence belongs to the peptidase S16 family.

It localises to the peroxisome matrix. The enzyme catalyses Hydrolysis of proteins in presence of ATP.. In terms of biological role, ATP-dependent serine protease that mediates the selective degradation of misfolded and unassembled polypeptides in the peroxisomal matrix. Necessary for type 2 peroxisome targeting signal (PTS2)-containing protein processing and facilitates peroxisome matrix protein import. In Debaryomyces hansenii (strain ATCC 36239 / CBS 767 / BCRC 21394 / JCM 1990 / NBRC 0083 / IGC 2968) (Yeast), this protein is Lon protease homolog 2, peroxisomal.